We begin with the raw amino-acid sequence, 398 residues long: Bifunctional enzyme IspD/IspF (398 aa).

The interval 1-234 (MTNSPRTAAI…SRLMAALGDI (234 aa)) is 2-C-methyl-D-erythritol 4-phosphate cytidylyltransferase. The segment at 235 to 398 (RTGTGYDVHA…LPWGADGLAG (164 aa)) is 2-C-methyl-D-erythritol 2,4-cyclodiphosphate synthase. 2 residues coordinate a divalent metal cation: Asp241 and His243. Residues 241–243 (DVH) and 267–268 (HS) each bind 4-CDP-2-C-methyl-D-erythritol 2-phosphate. An a divalent metal cation-binding site is contributed by His275. 4-CDP-2-C-methyl-D-erythritol 2-phosphate contacts are provided by residues 289–291 (DIG), 365–368 (TTSE), Phe372, and Arg375.

It in the N-terminal section; belongs to the IspD/TarI cytidylyltransferase family. IspD subfamily. The protein in the C-terminal section; belongs to the IspF family. A divalent metal cation is required as a cofactor.

The catalysed reaction is 2-C-methyl-D-erythritol 4-phosphate + CTP + H(+) = 4-CDP-2-C-methyl-D-erythritol + diphosphate. The enzyme catalyses 4-CDP-2-C-methyl-D-erythritol 2-phosphate = 2-C-methyl-D-erythritol 2,4-cyclic diphosphate + CMP. It participates in isoprenoid biosynthesis; isopentenyl diphosphate biosynthesis via DXP pathway; isopentenyl diphosphate from 1-deoxy-D-xylulose 5-phosphate: step 2/6. Its pathway is isoprenoid biosynthesis; isopentenyl diphosphate biosynthesis via DXP pathway; isopentenyl diphosphate from 1-deoxy-D-xylulose 5-phosphate: step 4/6. Its function is as follows. Bifunctional enzyme that catalyzes the formation of 4-diphosphocytidyl-2-C-methyl-D-erythritol from CTP and 2-C-methyl-D-erythritol 4-phosphate (MEP) (IspD), and catalyzes the conversion of 4-diphosphocytidyl-2-C-methyl-D-erythritol 2-phosphate (CDP-ME2P) to 2-C-methyl-D-erythritol 2,4-cyclodiphosphate (ME-CPP) with a corresponding release of cytidine 5-monophosphate (CMP) (IspF). This Rhodopseudomonas palustris (strain TIE-1) protein is Bifunctional enzyme IspD/IspF.